The sequence spans 298 residues: Tyrosine recombinase XerD (298 aa).

Residues 2–87 enclose the Core-binding (CB) domain; sequence KQDLARIEQF…AVRRLFQYLY (86 aa). One can recognise a Tyr recombinase domain in the interval 108–292; the sequence is RLPKDLSEAQ…ATERLRQLHQ (185 aa). Active-site residues include Arg148, Lys172, His244, Arg247, and His270. Residue Tyr279 is the O-(3'-phospho-DNA)-tyrosine intermediate of the active site.

This sequence belongs to the 'phage' integrase family. XerD subfamily. In terms of assembly, forms a cyclic heterotetrameric complex composed of two molecules of XerC and two molecules of XerD, in which XerC interacts with XerD via its C-terminal region, XerD interacts with XerC via its C-terminal region and so on.

It is found in the cytoplasm. FtsK may regulate the catalytic switch between XerC and XerD in the heterotetrameric complex during the two steps of the recombination process. Site-specific tyrosine recombinase, which acts by catalyzing the cutting and rejoining of the recombining DNA molecules. Binds cooperatively to specific DNA consensus sequences that are separated from XerC binding sites by a short central region, forming the heterotetrameric XerC-XerD complex that recombines DNA substrates. The complex is essential to convert dimers of the bacterial chromosome into monomers to permit their segregation at cell division. It also contributes to the segregational stability of plasmids. In the complex XerD specifically exchanges the bottom DNA strands. This is Tyrosine recombinase XerD (xerD) from Escherichia coli O6:H1 (strain CFT073 / ATCC 700928 / UPEC).